The sequence spans 473 residues: Sensor histidine kinase GtrS (473 aa).

The Cytoplasmic portion of the chain corresponds to 1 to 8; it reads MPRSLLGR. Residues 9 to 29 form a helical membrane-spanning segment; the sequence is MLLLTLLAVLVAQGLSSLFWL. The Periplasmic segment spans residues 30–197; sequence SHLRSSQREG…LEPEGLQPQQ (168 aa). A helical membrane pass occupies residues 198 to 218; it reads VLSIVFTSLLLLLFTGLLMHW. The HAMP domain occupies 217–269; that stretch reads HWQSRPLKRLARAARDLALGSPSAALEERGASELVEVARAFNTMHERIDRYLN. Topologically, residues 219-473 are cytoplasmic; the sequence is QSRPLKRLAR…SLRLPRLGLE (255 aa). Residues 277 to 471 enclose the Histidine kinase domain; that stretch reads AISHDLRTPI…RVSLRLPRLG (195 aa). H280 carries the phosphohistidine; by autocatalysis modification.

In terms of processing, autophosphorylated.

Its subcellular location is the cell inner membrane. It catalyses the reaction ATP + protein L-histidine = ADP + protein N-phospho-L-histidine.. Its function is as follows. Member of the two-component regulatory system GtrS/GltR involved in the regulation of glucose metabolism and transport, as well as regulation of the exotoxin A gene expression. GtrS recognizes and binds 2-ketogluconate and 6-phosphogluconate via its sensor domain, which accelerates GtrS autophosphorylation and concomitant transphosphorylation and regulation of the response regulator GltR. In terms of biological role, plays a key role during bacteria-host interactions and is required for optimal colonization and dissemination in a mouse model of infection. Contributes to modulation of the type III secretion system (T3SS) in response to host cells via the regulation of the OprB transport system. The polypeptide is Sensor histidine kinase GtrS (Pseudomonas aeruginosa (strain ATCC 15692 / DSM 22644 / CIP 104116 / JCM 14847 / LMG 12228 / 1C / PRS 101 / PAO1)).